The primary structure comprises 114 residues: Beta-microseminoprotein (114 aa).

The signal sequence occupies residues 1 to 20 (MNVLLGGFVIFATFVTLCNA). Cystine bridges form between Cys-22–Cys-70, Cys-38–Cys-62, Cys-57–Cys-93, Cys-60–Cys-69, and Cys-84–Cys-107.

Belongs to the beta-microseminoprotein family. In terms of assembly, homodimer; Interacts with PI16.

It localises to the secreted. This Papio anubis (Olive baboon) protein is Beta-microseminoprotein (MSMB).